Reading from the N-terminus, the 345-residue chain is N-acetyl-gamma-glutamyl-phosphate reductase (345 aa).

C149 is an active-site residue.

The protein belongs to the NAGSA dehydrogenase family. Type 1 subfamily.

Its subcellular location is the cytoplasm. The catalysed reaction is N-acetyl-L-glutamate 5-semialdehyde + phosphate + NADP(+) = N-acetyl-L-glutamyl 5-phosphate + NADPH + H(+). It functions in the pathway amino-acid biosynthesis; L-arginine biosynthesis; N(2)-acetyl-L-ornithine from L-glutamate: step 3/4. Its function is as follows. Catalyzes the NADPH-dependent reduction of N-acetyl-5-glutamyl phosphate to yield N-acetyl-L-glutamate 5-semialdehyde. The sequence is that of N-acetyl-gamma-glutamyl-phosphate reductase from Marinobacter nauticus (strain ATCC 700491 / DSM 11845 / VT8) (Marinobacter aquaeolei).